The primary structure comprises 311 residues: Beta-lactamase (311 aa).

Positions 1–36 (MRKPTSSLTRRSVLGAGLGLGGALALGSTTASAASA) form a signal peptide, tat-type signal. S86 (acyl-ester intermediate) is an active-site residue. 252-254 (KSG) provides a ligand contact to substrate.

Belongs to the class-A beta-lactamase family. Post-translationally, predicted to be exported by the Tat system. The position of the signal peptide cleavage has not been experimentally proven.

It catalyses the reaction a beta-lactam + H2O = a substituted beta-amino acid. Its function is as follows. Hydrolyzes benzylpenicillin and cloxacillin (at 10% of the rate of benzylpenicillin). This Streptomyces cellulosae protein is Beta-lactamase (bla).